We begin with the raw amino-acid sequence, 47 residues long: Delta-actitoxin-Cgg1b (47 aa).

Proline 3 carries the hydroxyproline modification. 3 cysteine pairs are disulfide-bonded: cysteine 4–cysteine 44, cysteine 6–cysteine 34, and cysteine 27–cysteine 45.

It belongs to the sea anemone sodium channel inhibitory toxin family. Type I subfamily.

The protein resides in the secreted. It localises to the nematocyst. Functionally, binds voltage-dependently at site 3 of sodium channels (Nav) and inhibits the inactivation, thereby blocking neuronal transmission. This chain is Delta-actitoxin-Cgg1b, found in Condylactis gigantea (Giant Caribbean anemone).